Reading from the N-terminus, the 87-residue chain is Small ribosomal subunit protein uS15 (87 aa).

Residues 1-19 (MDKAKKQELMAKHARHEGD) are compositionally biased toward basic and acidic residues. Residues 1–23 (MDKAKKQELMAKHARHEGDTGSP) are disordered.

This sequence belongs to the universal ribosomal protein uS15 family. As to quaternary structure, part of the 30S ribosomal subunit. Forms a bridge to the 50S subunit in the 70S ribosome, contacting the 23S rRNA.

Its function is as follows. One of the primary rRNA binding proteins, it binds directly to 16S rRNA where it helps nucleate assembly of the platform of the 30S subunit by binding and bridging several RNA helices of the 16S rRNA. Forms an intersubunit bridge (bridge B4) with the 23S rRNA of the 50S subunit in the ribosome. The chain is Small ribosomal subunit protein uS15 from Clostridium botulinum (strain Loch Maree / Type A3).